The chain runs to 591 residues: Protein misato homolog 1 (591 aa).

It belongs to the misato family.

It localises to the mitochondrion outer membrane. Its subcellular location is the cytoplasm. In terms of biological role, involved in the regulation of mitochondrial distribution and morphology. Required for mitochondrial fusion and mitochondrial network formation. The sequence is that of Protein misato homolog 1 (msto1) from Danio rerio (Zebrafish).